Consider the following 139-residue polypeptide: Gene 22 protein (139 aa).

The chain is Gene 22 protein (22) from Mycobacterium phage D29 (Mycobacteriophage D29).